We begin with the raw amino-acid sequence, 238 residues long: CFA/I fimbrial subunit A (238 aa).

The first 19 residues, 1 to 19 (MHKLFYLLSLLMAPFVANA), serve as a signal peptide directing secretion.

Its subcellular location is the fimbrium. Its function is as follows. Might function as a shuttle protein in the transport of fimbria through the periplasmic space or might function as an adhesin. This Escherichia coli protein is CFA/I fimbrial subunit A (cfaA).